The following is a 735-amino-acid chain: Delta-1-pyrroline-5-carboxylate synthase 2 (735 aa).

The glutamate 5-kinase stretch occupies residues 1 to 315 (MGRGGIGGAG…WGCSKEATAR (315 aa)). Ser79, Asp176, and Asn195 together coordinate substrate. Residues 215 to 216 (SD), 221 to 226 (YSGPPS), and 255 to 261 (RGGMQAK) contribute to the ATP site. Residues 316–735 (EMAVAARDCS…VYTHRELPLQ (420 aa)) form a gamma-glutamyl phosphate reductase region.

This sequence in the N-terminal section; belongs to the glutamate 5-kinase family. In the C-terminal section; belongs to the gamma-glutamyl phosphate reductase family.

It catalyses the reaction L-glutamate + ATP = L-glutamyl 5-phosphate + ADP. The enzyme catalyses L-glutamate 5-semialdehyde + phosphate + NADP(+) = L-glutamyl 5-phosphate + NADPH + H(+). It functions in the pathway amino-acid biosynthesis; L-proline biosynthesis; L-glutamate 5-semialdehyde from L-glutamate: step 1/2. Its pathway is amino-acid biosynthesis; L-proline biosynthesis; L-glutamate 5-semialdehyde from L-glutamate: step 2/2. Its activity is regulated as follows. Feedback regulated by proline. Its function is as follows. P5CS plays a key role in proline biosynthesis, leading to osmoregulation in plants. Involved in abiotic stress tolerance. The chain is Delta-1-pyrroline-5-carboxylate synthase 2 from Oryza sativa subsp. japonica (Rice).